The primary structure comprises 355 residues: DNA-binding protein RHL1 (355 aa).

Disordered stretches follow at residues 1-26 (MVRA…KQRK), 181-215 (DFQG…VDNE), and 229-355 (IQVT…SSKA). Basic and acidic residues predominate over residues 14–23 (GGDKDDAESK). 2 stretches are compositionally biased toward low complexity: residues 230–246 (QVTP…VTPV) and 260–274 (AETS…SEGN). Basic and acidic residues-rich tracts occupy residues 281-296 (KPLL…REES) and 309-326 (LPEE…KDSK). A compositionally biased stretch (low complexity) spans 344–355 (AGTSKAKSSSKA).

In terms of assembly, interacts with BIN4 and TOP6A, but not with TOP6B. Expressed inproliferating and endoreduplicating cells.

It localises to the nucleus. Functionally, component of the DNA topoisomerase VI complex involved in chromatin organization and progression of endoreduplication cycles. Binds to DNA. Required for endoreduplication beyond 8C. In Arabidopsis thaliana (Mouse-ear cress), this protein is DNA-binding protein RHL1 (RHL1).